We begin with the raw amino-acid sequence, 190 residues long: Cancer-related nucleoside-triphosphatase homolog (190 aa).

Residues 9–16 (GPPGVGKT) and 109–116 (VCIIDEIG) contribute to the ATP site. An N6-acetyllysine modification is found at Lys165.

It belongs to the THEP1 NTPase family. In terms of assembly, monomer.

The enzyme catalyses a ribonucleoside 5'-triphosphate + H2O = a ribonucleoside 5'-diphosphate + phosphate + H(+). The catalysed reaction is 5-methyl-UTP + H2O = 5-methyl-UDP + phosphate + H(+). It catalyses the reaction CTP + H2O = CDP + phosphate + H(+). It carries out the reaction ATP + H2O = ADP + phosphate + H(+). The enzyme catalyses GTP + H2O = GDP + phosphate + H(+). In terms of biological role, has nucleotide phosphatase activity towards ATP, GTP, CTP, TTP and UTP. Hydrolyzes nucleoside diphosphates with lower efficiency. The protein is Cancer-related nucleoside-triphosphatase homolog of Mus musculus (Mouse).